The sequence spans 316 residues: Aspartate carbamoyltransferase catalytic subunit (316 aa).

Residues arginine 58 and threonine 59 each contribute to the carbamoyl phosphate site. Residue lysine 86 participates in L-aspartate binding. Residues arginine 108, histidine 136, and glutamine 139 each contribute to the carbamoyl phosphate site. 2 residues coordinate L-aspartate: arginine 169 and arginine 223. Positions 264 and 265 each coordinate carbamoyl phosphate.

The protein belongs to the aspartate/ornithine carbamoyltransferase superfamily. ATCase family. As to quaternary structure, heterododecamer (2C3:3R2) of six catalytic PyrB chains organized as two trimers (C3), and six regulatory PyrI chains organized as three dimers (R2).

The catalysed reaction is carbamoyl phosphate + L-aspartate = N-carbamoyl-L-aspartate + phosphate + H(+). The protein operates within pyrimidine metabolism; UMP biosynthesis via de novo pathway; (S)-dihydroorotate from bicarbonate: step 2/3. Functionally, catalyzes the condensation of carbamoyl phosphate and aspartate to form carbamoyl aspartate and inorganic phosphate, the committed step in the de novo pyrimidine nucleotide biosynthesis pathway. The protein is Aspartate carbamoyltransferase catalytic subunit of Dinoroseobacter shibae (strain DSM 16493 / NCIMB 14021 / DFL 12).